Here is a 572-residue protein sequence, read N- to C-terminus: Phosphoglucomutase-1 (572 aa).

Substrate is bound by residues threonine 23, arginine 27, 126-127 (SH), and lysine 140. Catalysis depends on serine 126, which acts as the Phosphoserine intermediate. Position 126 (serine 126) interacts with Mg(2+). 3 residues coordinate Mg(2+): aspartate 308, aspartate 310, and aspartate 312. Substrate-binding positions include 312-313 (DR), threonine 373, 392-394 (EES), lysine 405, and arginine 527.

This sequence belongs to the phosphohexose mutase family. Requires Mg(2+) as cofactor. Post-translationally, phosphorylated via a calcium-dependent protein kinase. Very rapidly (within 80 ms) dephosphorylated during triggered trichocyst exocytosis. In terms of processing, O-glycosylated with a short chain of mannose residues.

Its subcellular location is the cytoplasm. It catalyses the reaction alpha-D-glucose 1-phosphate = alpha-D-glucose 6-phosphate. Its function is as follows. May be involved in membrane fusion in exocytosis. The polypeptide is Phosphoglucomutase-1 (pp63-1) (Paramecium tetraurelia).